We begin with the raw amino-acid sequence, 448 residues long: Putative sodium-coupled neutral amino acid transporter 11 (448 aa).

The segment at 1–20 is disordered; sequence MESERSCLLSSHDAGKGGSS. A run of 11 helical transmembrane segments spans residues 22-42, 52-72, 94-114, 143-163, 165-185, 200-220, 246-266, 286-306, 324-344, 346-366, and 389-409; these read VSSA…IGLP, MGLL…ILLV, IGYI…MISY, FVIA…RDIA, LGKV…TVVV, AWVF…FALI, ISVG…YATF, TFGR…ECFV, SSHV…SLSY, CLGI…MFIF, and MILV…ALFP. 3 N-linked (GlcNAc...) asparagine glycosylation sites follow: Asn425, Asn440, and Asn444.

Belongs to the amino acid/polyamine transporter 2 family.

The protein localises to the membrane. Functionally, putative sodium-dependent amino acid/proton antiporter. The polypeptide is Putative sodium-coupled neutral amino acid transporter 11 (slc38a11) (Danio rerio (Zebrafish)).